Consider the following 804-residue polypeptide: Leucine--tRNA ligase (804 aa).

The short motif at 40 to 51 is the 'HIGH' region element; sequence PYPSGAGLHVGH. A 'KMSKS' region motif is present at residues 576–580; that stretch reads KMSKS. Residue Lys-579 coordinates ATP.

It belongs to the class-I aminoacyl-tRNA synthetase family.

It is found in the cytoplasm. It catalyses the reaction tRNA(Leu) + L-leucine + ATP = L-leucyl-tRNA(Leu) + AMP + diphosphate. This chain is Leucine--tRNA ligase, found in Bacillus velezensis (strain DSM 23117 / BGSC 10A6 / LMG 26770 / FZB42) (Bacillus amyloliquefaciens subsp. plantarum).